A 1829-amino-acid polypeptide reads, in one-letter code: MSTEEDPSLVDAEESMEEGSVTQDATEETEEEEEQEQGDEAGPSERKRSSRKKGGKGGKKGSKKSAAAASKVEIPDPYNSTSEEVCAAIGLTDVEFDYDEEEFQGISNLKTFSSIIKPQILEANPGTNVSKMYPMFQVKYKEYQDHMAAQGKPVQKQARGSKTPAVSTPVIPPRSAPTKTRSARRKRRDSDAPDSDQEFEAFIKQQEQLEDDLVKDKEDARIKRAAEREEKKKGALEAARAAKKAKLEKGEEAENNDYCEECKQDGELLLCDTCPRAYHTVCIDENMEEPPEGDWSCAHCIEHGPEVVKEEPAKQNDEFCKICKETENLLLCDSCVCSFHAYCIDPPLTEVPKEETWSCPRCETVKPEHKIEKILCWRWKEIPYPEPLEAGKEASSDDAMLKPPRKMEPRREREFFVKWKYLSYWQCSWVSEMLLEVHFRMLILLYWRKNDSDAPPEFEESVTSRHHSDNDPYKLRERFYQYGIKPEWMQIHRIINHQSYAKSQQDYLVKWKELSYDQATWERDDSNIANYEEAIIKYWQHRESKLNEDIPKNVQKMIAKHREAKGLPPKEDEKKKKKREKIDIRKKYEVQPDYVTETGGKLHPYQLEGLNWLRHCWSNGTDAILADEMGLGKTVQSLTFLYSLMKEGHCKGPFLIAAPLSTIINWEREAEQWCPDFYVVTYVGLRDARVVLREHEFSFVEGAVRSGPKASKMKTTENMKFHVLLTSYETINMDKTILSSIEWGALVVDEAHRLKNNQSLFFKNLNEYTIHYRVLLTGTPLQNNLEELFHLLNFLSKERFNQLEAFTAEFNEISKEDQIEKLHNLLGPHMLRRLKADVLTGMPSKSELIVRVELSAMQKKWYKNILTRNFDALNVKNGGTQMSLMNVLMELKKCCNHPYLFVKAELEAPKEKNGMYEGTALIKNSGKFVLLQKMLRKLKDGGHRVLIFSQMTRMLDIMEDLCEYEGYRYERIDGSIMGQMRQDAIDRYNAPGAQQFIFLLSTRAGGLGINLATADTVIIYDSDWNPHNDIQAFSRAHRLGQKHKVMIYRFVTKKSVEEKITSVAKKKMLLNHLVVRAGLGGKEGKTMSKTELDDVLRWGTEELFSEDLDAAEGEGSEKKGAAAQEIVWDDAAVDALLDRSNKEETPAGEDGEEKAEWQNEYLSSFKVASYQTKETEGQEEEEEEETEVIKEDEKEPDPDYWEKLLKHHYEQDREIELQKLGKGKRVRKQINYASENMGTDWSKQNQTQDDDDDNESYRGSDNGDGLNSDEDDYDEKKKRRRDEEKMPPLMAKVNGQVEILGFNPRQRKAFYGAVMRWGMPPQDSHQSQWLVRDLRNKSEKVFRAYASLFMRHLCEPGADGHDTFNDGVPREGLNRQHVLGRIGLLSLVRRKVQEFEQYNGQWSMPEIQDEVLAKAANGSAQGSSRSTPKPKEEPKEEPMEKEDATETVNGATSEPATDAESEQNAPVDEPMDTDEAKEPKEEPIETEKPRAARPSFKFNICDGGFTELHSLWANEEKVARNGKEYEIWYRRHDYWLLAGVVVHGYGRFQANFNDIINDPRFSVLNEPFKEVGAEATGSDIKAKFMQRRFKLIEQSLVIEEQLRRAAHANRHLQPDNVGPLAQRFADLENIAESQANIAKESSAGNRNANAVLHKTLVQLDEILSDMKADVSRLPSTFTQLATVTERLNMTERQILSRLTTKDEDAIANRSVLPPPGPFVTPILRQQMDGIQPKFAALYSKFMSENGERMEEDEPVEAEEEEGVKQEPDDETQDSAEAPPVLSAEVNSDDSNDVPSTSAAAAVSSETAADAEPASAEDQAPTDEPEPMET.

2 stretches are compositionally biased toward acidic residues: residues 1–17 (MSTE…ESME) and 25–39 (ATEE…EQGD). Disordered regions lie at residues 1-81 (MSTE…YNST) and 147-198 (MAAQ…SDQE). The segment covering 48–63 (RSSRKKGGKGGKKGSK) has biased composition (basic residues). 2 consecutive PHD-type zinc fingers follow at residues 256–303 (NDYC…CIEH) and 317–365 (DEFC…CETV). Chromo domains follow at residues 401–458 (LKPP…PPEF) and 489–550 (MQIH…NEDI). The 185-residue stretch at 614–798 (RHCWSNGTDA…FHLLNFLSKE (185 aa)) folds into the Helicase ATP-binding domain. 627–634 (DEMGLGKT) is an ATP binding site. The DEAH box signature appears at 749–752 (DEAH). In terms of domain architecture, Helicase C-terminal spans 930 to 1093 (LLQKMLRKLK…GKTMSKTELD (164 aa)). Disordered regions lie at residues 1168–1198 (ASYQ…EPDP), 1234–1289 (SENM…MPPL), 1415–1495 (AANG…ARPS), and 1745–1829 (NGER…PMET). Acidic residues predominate over residues 1177 to 1186 (GQEEEEEEET). Polar residues-rich tracts occupy residues 1234–1247 (SENM…QNQT) and 1418–1427 (GSAQGSSRST). Residues 1429 to 1444 (KPKEEPKEEPMEKEDA) are compositionally biased toward basic and acidic residues. The span at 1446-1455 (ETVNGATSEP) shows a compositional bias: polar residues. Residues 1474–1490 (DEAKEPKEEPIETEKPR) are compositionally biased toward basic and acidic residues. Positions 1749 to 1773 (MEEDEPVEAEEEEGVKQEPDDETQD) are enriched in acidic residues. A compositionally biased stretch (low complexity) spans 1792-1811 (DVPSTSAAAAVSSETAADAE). Residues 1819–1829 (APTDEPEPMET) are compositionally biased toward acidic residues.

As to quaternary structure, component of the MEC (MEP-1-containing complex) complex that contains let-418, mep-1 and hda-1. Component of a NURD complex that contains let-418, hda-1, lin-40 and lin-53. Interacts with lin-1. Interacts with pie-1. Interacts with akir-1. In terms of tissue distribution, expressed in embryos and larva.

The protein resides in the nucleus. Part of a NuRD (Nucleosome Remodeling and Deacetylase) complex which is implicated in the synMuv B pathway that negatively regulates specification of vulval cell fate. This negative regulation is thought to be mediated via interaction with the promoter of lin-39, a key regulator in vulva development, and is dependent on the presence lin-1. Contributes to negative regulation of lag-2 which is expressed in the gut during larval development. Has a broad role in development. In association with akir-1, plays a role in regulating the transcription of antimicrobial peptide genes in response to fungal infection. In Caenorhabditis elegans, this protein is Protein let-418.